Consider the following 656-residue polypeptide: Threonine--tRNA ligase (656 aa).

In terms of domain architecture, TGS spans 1–64 (MAEAASLTFP…ERSGKIEIIT (64 aa)). The segment at 246–548 (DHRRLGREMD…LIENYAGHFP (303 aa)) is catalytic. Zn(2+)-binding residues include Cys-342, His-393, and His-525.

It belongs to the class-II aminoacyl-tRNA synthetase family. Homodimer. Zn(2+) serves as cofactor.

The protein resides in the cytoplasm. The catalysed reaction is tRNA(Thr) + L-threonine + ATP = L-threonyl-tRNA(Thr) + AMP + diphosphate + H(+). Catalyzes the attachment of threonine to tRNA(Thr) in a two-step reaction: L-threonine is first activated by ATP to form Thr-AMP and then transferred to the acceptor end of tRNA(Thr). Also edits incorrectly charged L-seryl-tRNA(Thr). The sequence is that of Threonine--tRNA ligase from Chelativorans sp. (strain BNC1).